We begin with the raw amino-acid sequence, 151 residues long: Putative UPF0320 protein YFL063W (151 aa).

Belongs to the UPF0320 family.

This Saccharomyces cerevisiae (strain ATCC 204508 / S288c) (Baker's yeast) protein is Putative UPF0320 protein YFL063W.